The primary structure comprises 245 residues: Orotidine 5'-phosphate decarboxylase (245 aa).

Substrate contacts are provided by residues D22, K44, 71-80 (DLKFHDIPNT), T131, R192, Q201, G221, and R222. K73 acts as the Proton donor in catalysis.

The protein belongs to the OMP decarboxylase family. Type 1 subfamily. Homodimer.

It catalyses the reaction orotidine 5'-phosphate + H(+) = UMP + CO2. The protein operates within pyrimidine metabolism; UMP biosynthesis via de novo pathway; UMP from orotate: step 2/2. Catalyzes the decarboxylation of orotidine 5'-monophosphate (OMP) to uridine 5'-monophosphate (UMP). This is Orotidine 5'-phosphate decarboxylase from Salmonella gallinarum (strain 287/91 / NCTC 13346).